The primary structure comprises 47 residues: Large ribosomal subunit protein bL34 (47 aa).

It belongs to the bacterial ribosomal protein bL34 family.

The sequence is that of Large ribosomal subunit protein bL34 from Mycobacteroides abscessus (strain ATCC 19977 / DSM 44196 / CCUG 20993 / CIP 104536 / JCM 13569 / NCTC 13031 / TMC 1543 / L948) (Mycobacterium abscessus).